The chain runs to 338 residues: Heat-inducible transcription repressor HrcA (338 aa).

This sequence belongs to the HrcA family.

Negative regulator of class I heat shock genes (grpE-dnaK-dnaJ and groELS operons). Prevents heat-shock induction of these operons. This is Heat-inducible transcription repressor HrcA from Polaromonas sp. (strain JS666 / ATCC BAA-500).